The sequence spans 242 residues: Protein HTATIP2 (242 aa).

The residue at position 2 (alanine 2) is an N-acetylalanine. The segment at 2–25 is required for interaction with elongation factor EEF1A1; the sequence is AETEALSKLREDFRMQNKSVFILG. NADPH contacts are provided by serine 27, glycine 28, glutamate 29, threonine 30, arginine 52, arginine 53, leucine 92, glycine 93, tyrosine 143, lysine 147, leucine 170, and arginine 178. The active-site Proton acceptor is tyrosine 143. The active site involves lysine 147.

In terms of assembly, monomer. Forms homodimers during oxidative stress. Interacts (via N-terminus) with elongation factor EEF1A1 (via middle-region); the interaction is direct and competes with EEF1A1 binding to guanyl-nucleotide exchange factor EEF1B2, thereby inhibiting GDP for GTP exchange and reactivation of EEF1A1. Interacts with nuclear transport receptors XPO4, IPO5/RANBP5, IPO7, IPO9 and KPNB1 as well as GCN1L1/GCN1 and LRPPRC probably through their HEAT repeats. Binds NCOA5/CIA.

Its subcellular location is the cytoplasm. Represses translation by preventing reactivation of elongation factor eEF1A. May also inhibit nuclear import by competing with nuclear import substrates for binding to a subset of nuclear transport receptors. Has additionally been proposed to act as a redox sensor involved in cellular oxidative stress surveillance. This is Protein HTATIP2 (HTATIP2) from Gorilla gorilla gorilla (Western lowland gorilla).